The chain runs to 1194 residues: Metabotropic glutamate receptor 1 (1194 aa).

The N-terminal stretch at 1–18 (MVGLLLFFFPAIFLEVSL) is a signal peptide. Topologically, residues 19–592 (LPRSPGRKVL…VRYLEWSNIE (574 aa)) are extracellular. A disulfide bridge links C67 with C109. Y74 lines the L-glutamate pocket. N-linked (GlcNAc...) asparagine glycosylation occurs at N98. L-glutamate is bound by residues S165 and 186 to 188 (SAT). The N-linked (GlcNAc...) asparagine glycan is linked to N223. L-glutamate is bound at residue Y236. C289 and C291 are joined by a disulfide. Residue D318 coordinates L-glutamate. A disulfide bond links C378 and C394. Residue N397 is glycosylated (N-linked (GlcNAc...) asparagine). K409 is an L-glutamate binding site. An intrachain disulfide couples C432 to C439. Residue N515 is glycosylated (N-linked (GlcNAc...) asparagine). Residues 593–615 (SIIAIAFSCLGILVTLFVTLIFV) form a helical membrane-spanning segment. The Cytoplasmic segment spans residues 616–629 (LYRDTPVVKSSSRE). The helical transmembrane segment at 630-650 (LCYIILAGIFLGYVCPFTLIA) threads the bilayer. At 651–658 (KPTTTSCY) the chain is on the extracellular side. C657 and C746 form a disulfide bridge. Residues 659–680 (LQRLLVGLSSAMCYSALVTKTN) traverse the membrane as a helical segment. Residues 681–703 (RIARILAGSKKKICTRKPRFMSA) are Cytoplasmic-facing. A helical membrane pass occupies residues 704-727 (WAQVIIASILISVQLTLVVTLIIM). Residues 728-750 (EPPMPILSYPSIKEVYLICNTSN) lie on the Extracellular side of the membrane. The chain crosses the membrane as a helical span at residues 751–772 (LGVVAPLGYNGLLIMSCTYYAF). The Cytoplasmic portion of the chain corresponds to 773–785 (KTRNVPANFNEAK). A helical membrane pass occupies residues 786–807 (YIAFTMYTTCIIWLAFVPIYFG). The Extracellular portion of the chain corresponds to 808 to 815 (SNYKIITT). Residues 816 to 840 (CFAVSLSVTVALGCMFTPKMYIIIA) traverse the membrane as a helical segment. Residues 841–1194 (KPERNVRSAF…RDYKQSSSTL (354 aa)) are Cytoplasmic-facing. At S853 the chain carries Phosphoserine. At T871 the chain carries Phosphothreonine. Residues 883-905 (AGNANSNGKSVSWSEPGGGQVPK) are disordered. Over residues 885 to 895 (NANSNGKSVSW) the composition is skewed to polar residues. Phosphoserine occurs at positions 894 and 969. Positions 1007–1030 (PALPKGLPPPLQQQQQPPPQQKSL) are disordered. A compositionally biased stretch (pro residues) spans 1012 to 1026 (GLPPPLQQQQQPPPQ). S1091 carries the phosphoserine modification. Positions 1113 to 1173 (HEREGNTEED…SPVSESVLCT (61 aa)) are disordered. The span at 1119-1131 (TEEDELEEEEEDL) shows a compositional bias: acidic residues. Phosphoserine is present on S1142. Residue T1146 is modified to Phosphothreonine. Phosphoserine is present on S1149. Residues 1154-1170 (SVASGSSVPSSPVSESV) are compositionally biased toward low complexity.

It belongs to the G-protein coupled receptor 3 family. Homodimer; disulfide-linked. The PPXXF motif binds HOMER1, HOMER2 and HOMER3. Interacts with TAMALIN. Interacts with RYR1, RYR2, ITPR1, SHANK1 and SHANK3. Interacts with SIAH1. In terms of tissue distribution, detected in brain.

It is found in the cell membrane. Its subcellular location is the postsynaptic cell membrane. It localises to the cell projection. The protein resides in the dendrite. With respect to regulation, signaling is inhibited by the antagonist LY341495. The LY341495 binding site partially overlaps with the glutamate binding site. Signaling is also inhibited by synthetic allosteric regulators, such as FITM (4-fluoro-N-(4-(6-(isopropylamino)pyrimidin-4-yl)thiazol-2-yl)-N-methylbenzamide) that bind in a pocket between the transmembrane helices. G-protein coupled receptor for glutamate. Ligand binding causes a conformation change that triggers signaling via guanine nucleotide-binding proteins (G proteins) and modulates the activity of down-stream effectors. Signaling activates a phosphatidylinositol-calcium second messenger system. May participate in the central action of glutamate in the CNS, such as long-term potentiation in the hippocampus and long-term depression in the cerebellum. May function in the light response in the retina. Induces GRID1 and GRID2 cation-channel activation via GNAQ-PLC-PKC pathway in dopaminergic neurons and cerebellar Purkinje cell, respectively. This chain is Metabotropic glutamate receptor 1 (GRM1), found in Homo sapiens (Human).